Consider the following 362-residue polypeptide: Very-long-chain (3R)-3-hydroxyacyl-CoA dehydratase 3 (362 aa).

N-acetylmethionine is present on Met1. At 1 to 149 (METQVLTPHV…ETLTNLKKGY (149 aa)) the chain is on the cytoplasmic side. Residues 5-94 (VLTPHVYWAQ…KGSHWWERLT (90 aa)) form the CS domain. The residue at position 7 (Thr7) is a Phosphothreonine. A coiled-coil region spans residues 111-138 (LDESDAEMELRAKEEERLNKLRLEREGS). Ser114 is subject to Phosphoserine. Residues 150 to 170 (LFMYNLVQLLGFSWIFVNLTV) traverse the membrane as a helical segment. Over 171–189 (RFFILGKESFYDTFHNVAD) the chain is Lumenal. The chain crosses the membrane as a helical span at residues 190–210 (MMYFCQMLALVETLNAAIGVT). Topologically, residues 211–212 (ST) are cytoplasmic. A helical transmembrane segment spans residues 213–233 (PVLPALIQFLGRNFILFLVFG). Over 234–242 (TMEEMQNKA) the chain is Lumenal. The helical transmembrane segment at 243 to 263 (VVFFVFYSWSAIEIFRYPFYM) threads the bilayer. The Cytoplasmic portion of the chain corresponds to 264 to 280 (LSCIDMDWKVLTWLRYT). A helical transmembrane segment spans residues 281–301 (MWIPLYPLGCLSEAVAVIQSI). Active-site residues include Tyr286 and Glu293. Residues 302-322 (PVFNESGRFSFTLPYPVKMKV) lie on the Lumenal side of the membrane. A helical transmembrane segment spans residues 323-343 (RFSFFLQVYLVMLFLGLYINF). Residues 344 to 362 (RHLYKQRRRRYGQKKKKLH) lie on the Cytoplasmic side of the membrane.

Belongs to the very long-chain fatty acids dehydratase HACD family. May interact with enzymes of the ELO family (including ELOVL1); with those enzymes that mediate condensation, the first of the four steps of the reaction cycle responsible for fatty acids elongation, may be part of a larger fatty acids elongase complex. Interacts with RAC1. Associates with internalized insulin receptor/INSR complexes on Golgi/endosomal membranes; HACD3/PTPLAD1 together with ATIC and PRKAA2/AMPK2 is proposed to be part of a signaling network regulating INSR autophosphorylation and endocytosis.

The protein resides in the endoplasmic reticulum membrane. It catalyses the reaction a very-long-chain (3R)-3-hydroxyacyl-CoA = a very-long-chain (2E)-enoyl-CoA + H2O. It carries out the reaction (3R)-hydroxyhexadecanoyl-CoA = (2E)-hexadecenoyl-CoA + H2O. It participates in lipid metabolism; fatty acid biosynthesis. Catalyzes the third of the four reactions of the long-chain fatty acids elongation cycle. This endoplasmic reticulum-bound enzymatic process, allows the addition of two carbons to the chain of long- and very long-chain fatty acids/VLCFAs per cycle. This enzyme catalyzes the dehydration of the 3-hydroxyacyl-CoA intermediate into trans-2,3-enoyl-CoA, within each cycle of fatty acid elongation. Thereby, it participates in the production of VLCFAs of different chain lengths that are involved in multiple biological processes as precursors of membrane lipids and lipid mediators. Involved in Rac1-signaling pathways leading to the modulation of gene expression. Promotes insulin receptor/INSR autophosphorylation and is involved in INSR internalization. The sequence is that of Very-long-chain (3R)-3-hydroxyacyl-CoA dehydratase 3 from Mus musculus (Mouse).